A 138-amino-acid polypeptide reads, in one-letter code: Dehydratase iacD (138 aa).

The EthD domain maps to 18–113 (GVSEEDFIEW…LKDQDVWMDN (96 aa)).

Belongs to the tpcK family.

Its pathway is secondary metabolite biosynthesis. Dehydratase; part of the gene cluster that mediates the biosynthesis of iso-A82775C, a enylepoxycyclohexane and biosynthetic precursor of the chloropestolide anticancer natural products. Within the cluster, the prenyltransferase iacE prenylates siccayne to generate pestalodiol E, using dimethylallyl diphosphate (DMAPP) as cosubstrate. The probable oxidoreductase iacF is then involved in the epoxidation of pestalodiol F to pestalodiol F, which is further converted to pestalofone A by the short-chain dehydrogenase/reductase iacG. Iso-A82775C is subsequently generated from pestalofone A by the short-chain dehydrogenase/reductase iacC. Iso-A82775C is further condensed with maldoxin via a Diels-Alder reaction to produce the anticancer natural products chloropestolides A to E. This is Dehydratase iacD from Pestalotiopsis fici (strain W106-1 / CGMCC3.15140).